Reading from the N-terminus, the 87-residue chain is Cell division topological specificity factor (87 aa).

The protein belongs to the MinE family.

Its function is as follows. Prevents the cell division inhibition by proteins MinC and MinD at internal division sites while permitting inhibition at polar sites. This ensures cell division at the proper site by restricting the formation of a division septum at the midpoint of the long axis of the cell. The polypeptide is Cell division topological specificity factor (Herpetosiphon aurantiacus (strain ATCC 23779 / DSM 785 / 114-95)).